The following is a 202-amino-acid chain: Small ribosomal subunit protein uS4c (202 aa).

The S4 RNA-binding domain occupies 90–153; it reads MRLDNIIFRL…KSEAIISKNI (64 aa).

Belongs to the universal ribosomal protein uS4 family. In terms of assembly, part of the 30S ribosomal subunit. Contacts protein S5. The interaction surface between S4 and S5 is involved in control of translational fidelity.

Its subcellular location is the plastid. It localises to the chloroplast. In terms of biological role, one of the primary rRNA binding proteins, it binds directly to 16S rRNA where it nucleates assembly of the body of the 30S subunit. With S5 and S12 plays an important role in translational accuracy. The protein is Small ribosomal subunit protein uS4c (rps4) of Leucodon sciuroides (Moss).